A 146-amino-acid polypeptide reads, in one-letter code: UPF0260 protein Spea_2441 (146 aa).

This sequence belongs to the UPF0260 family.

This Shewanella pealeana (strain ATCC 700345 / ANG-SQ1) protein is UPF0260 protein Spea_2441.